The sequence spans 264 residues: 3-methyl-2-oxobutanoate hydroxymethyltransferase (264 aa).

Residues aspartate 45 and aspartate 84 each contribute to the Mg(2+) site. 3-methyl-2-oxobutanoate contacts are provided by residues 45-46 (DS), aspartate 84, and lysine 112. Glutamate 114 contacts Mg(2+). Glutamate 181 functions as the Proton acceptor in the catalytic mechanism.

The protein belongs to the PanB family. As to quaternary structure, homodecamer; pentamer of dimers. Mg(2+) serves as cofactor.

It is found in the cytoplasm. The enzyme catalyses 3-methyl-2-oxobutanoate + (6R)-5,10-methylene-5,6,7,8-tetrahydrofolate + H2O = 2-dehydropantoate + (6S)-5,6,7,8-tetrahydrofolate. The protein operates within cofactor biosynthesis; (R)-pantothenate biosynthesis; (R)-pantoate from 3-methyl-2-oxobutanoate: step 1/2. Functionally, catalyzes the reversible reaction in which hydroxymethyl group from 5,10-methylenetetrahydrofolate is transferred onto alpha-ketoisovalerate to form ketopantoate. This Shigella dysenteriae serotype 1 (strain Sd197) protein is 3-methyl-2-oxobutanoate hydroxymethyltransferase.